An 826-amino-acid chain; its full sequence is MTVSNNGMAMPSVPPKIDCSEAIQDSPKFRATVAQHAMYFNRLENRLNEMLRHITAMIDFSKNYTNTFYKLTVSVNQLCDESFSGNPLASTTFQGLSEAYAHTVNLFRTYFDHSNVVTFTKLSNFIKIELTKVAESRAHFENMSQSMDDALVKNASISRQKPADATEGRNALTAVGTCFAHTTLDYVANINIAHAHKDHMILDALWTLVRESSAFFSKGHATFDEWTAADNGAIADTIQTFAAKSKLIERKMQDVHSLVPKEMFQHPSGMPIEPDVMMEGYLYKRSSNAFKTWNRRWFQIKDKQLLYSHRSTDLEPATIMEENLRICLVRPAPSNIDRIGCFELVTPTRIHLLQADSESLCQDWMRALQRTILALHEGDSVDVASTSPRNKTTSMSSGVTLTSANAISPLSNAMDVTKGRSVSDPASTYTSANTSSISTAAGFSSSTTAFEQVRRVPGNEVCADCGSPAPKWVSINLGVVLCIECSGAHRSLGVQTSKVRSLCMDSIDNELRDVLLALGNRQVNEIFLAHLPPADSIVPPQINEKSARPAREAWIKAKYVERRFAVAEDTRARSSATNRQEHLKHKTSIGGNSSSNGVNRSSSYADVQDAESGGLLDADPWSADLSVPVPTASKRLSACGSDTNLDAIGSSSIDTKTVEWDSVKEACECGDLLALMTAYAQGFDLNALHNGTTALHIATRNGQTAAVEFLLLNGAKINMLDEKLNTPLHLAAKEGHTLPVCQLLKRGADSNLANVDSKTPLDIAMECTHADIVTLFRVTIMRNDFNADFNNPMDETVEAVISDIARRAATEKEQKKTESLKSTSDI.

The region spanning 275-373 (DVMMEGYLYK…WMRALQRTIL (99 aa)) is the PH domain. Residues 447 to 572 (TTAFEQVRRV…RFAVAEDTRA (126 aa)) enclose the Arf-GAP domain. The C4-type zinc-finger motif lies at 462–485 (CADCGSPAPKWVSINLGVVLCIEC). Residues 570-604 (TRARSSATNRQEHLKHKTSIGGNSSSNGVNRSSSY) are disordered. Residues 588–603 (SIGGNSSSNGVNRSSS) show a composition bias toward low complexity. 3 ANK repeats span residues 690–719 (NGTT…KINM), 723–752 (KLNT…DSNL), and 756–789 (DSKT…NADF).

Interacts (via C-terminal ankyrin repeat) with rab-10 (GTP-bound form); the interaction is required for cnt-1 recruitment to endosomes. Interacts (via C-terminal ankyrin repeat) with rab-8 (GTP-bound form) and rab-35 (GTP-bound form). Post-translationally, cleaved by caspase ced-3 after Asp-382 and Asp-609. Cleavage at Asp-382 is required for subsequent cleavage at Asp-609.

The protein resides in the cytoplasm. The protein localises to the recycling endosome membrane. It localises to the basolateral cell membrane. It is found in the apical cell membrane. Its subcellular location is the cell membrane. Functionally, GTPase-activating protein for the ADP ribosylation factor family. Regulates endosome recycling downstream of rab-10 and upstream of arf-6. Promotes apoptosis during embryonic development. Produced by caspase ced-3-mediated cleavage, and translocates to the plasma membrane where it prevents the activation of the prosurvival Akt-1/2 and sgk-1 signaling pathway by competing with Akt-1/2 for the binding to PtdIns(3,4,5)P3. The protein is Arf-GAP with ANK repeat and PH domain-containing protein cnt-1 of Caenorhabditis elegans.